Here is a 79-residue protein sequence, read N- to C-terminus: Ketoisovalerate oxidoreductase subunit VorC (79 aa).

2 4Fe-4S ferredoxin-type domains span residues 4 to 33 (AYPVINRVECKACERCIIACPRKVLYMSNK) and 40 to 70 (HYVEYRGEGCNGCGNCYYTCPEINAIEVHIE). Residues C13, C16, C19, C23, C49, C52, C55, and C59 each contribute to the [4Fe-4S] cluster site.

In terms of assembly, heterotrimer of the VorA, VorB and VorC subunits. [4Fe-4S] cluster is required as a cofactor.

It carries out the reaction 3-methyl-2-oxobutanoate + 2 oxidized [2Fe-2S]-[ferredoxin] + CoA = 2-methylpropanoyl-CoA + 2 reduced [2Fe-2S]-[ferredoxin] + CO2 + H(+). The chain is Ketoisovalerate oxidoreductase subunit VorC (vorC) from Methanothermobacter marburgensis (strain ATCC BAA-927 / DSM 2133 / JCM 14651 / NBRC 100331 / OCM 82 / Marburg) (Methanobacterium thermoautotrophicum).